A 132-amino-acid chain; its full sequence is Interleukin-13 (132 aa).

The N-terminal stretch at 1 to 18 is a signal peptide; that stretch reads MALLLTTVIALTCLGGFA. N-linked (GlcNAc...) asparagine glycosylation is found at N38, N49, N57, and N72. Cystine bridges form between C48-C76 and C64-C90.

It belongs to the IL-4/IL-13 family. Interacts with IL13RA2.

The protein resides in the secreted. In terms of biological role, cytokine that plays important roles in allergic inflammation and immune response to parasite infection. Synergizes with IL2 in regulating interferon-gamma synthesis. Stimulates B-cell proliferation, and activation of eosinophils, basophils, and mast cells. Plays an important role in controlling IL33 activity by modulating the production of transmembrane and soluble forms of interleukin-1 receptor-like 1/IL1RL1. Displays the capacity to antagonize Th1-driven proinflammatory immune response and downregulates synthesis of many proinflammatory cytokines including IL1, IL6, IL10, IL12 and TNF-alpha through a mechanism that partially involves suppression of NF-kappa-B. Also functions on nonhematopoietic cells, including endothelial cells where it induces vascular cell adhesion protein 1/VCAM1, which is important in the recruitment of eosinophils. Exerts its biological effects through its receptors which comprises the IL4R chain and the IL13RA1 chain, to activate JAK1 and TYK2, leading to the activation of STAT6. Aside from IL13RA1, another receptor IL13RA2 acts as a high affinity decoy for IL13 and mediates internalization and depletion of extracellular IL13. The protein is Interleukin-13 (IL13) of Pan troglodytes (Chimpanzee).